A 244-amino-acid polypeptide reads, in one-letter code: Leucyl/phenylalanyl-tRNA--protein transferase (244 aa).

It belongs to the L/F-transferase family.

It localises to the cytoplasm. The enzyme catalyses N-terminal L-lysyl-[protein] + L-leucyl-tRNA(Leu) = N-terminal L-leucyl-L-lysyl-[protein] + tRNA(Leu) + H(+). The catalysed reaction is N-terminal L-arginyl-[protein] + L-leucyl-tRNA(Leu) = N-terminal L-leucyl-L-arginyl-[protein] + tRNA(Leu) + H(+). It catalyses the reaction L-phenylalanyl-tRNA(Phe) + an N-terminal L-alpha-aminoacyl-[protein] = an N-terminal L-phenylalanyl-L-alpha-aminoacyl-[protein] + tRNA(Phe). Functionally, functions in the N-end rule pathway of protein degradation where it conjugates Leu, Phe and, less efficiently, Met from aminoacyl-tRNAs to the N-termini of proteins containing an N-terminal arginine or lysine. The chain is Leucyl/phenylalanyl-tRNA--protein transferase from Thermodesulfovibrio yellowstonii (strain ATCC 51303 / DSM 11347 / YP87).